A 474-amino-acid polypeptide reads, in one-letter code: MRKQLPKDFVIGGATAAYQVEGATKEDGKGRVLWDDFLEKQGRFSPDPAADFYHRYDEDLALAEAYGHQVIRLSIAWSRIFPDGAGAVEPRGVAFYHRLFAACAKHHLIPFVTLHHFDTPERLHAIGDWLSQEMLEDFVEYARFCFEEFPEIKHWITINEPTSMAVQQYTSGTFPPAETGHFDKTFQAEHNQIVAHARIVNLYKSMGLDGEIGIVHALQTPYPYSDSSEDQHAADLQDALENRLYLDGTLAGDYAPKTLALIKEILAANQQPMFKYTDEEMAAIKKAAHQLDFVGVNNYFSKWLRAYHGKSETIHNGDGSKGSSVARLHGIGEEKKPAGIETTDWDWSIYPRGMYDMLMRIHQDYPLVPAIYVTENGIGLKESLPAEVTPNTVIADPKRIDYLKKYLSAVADAIQAGANVKGYFVWSLQDQFSWTNGYSKRYGLFFVDFPTQKRYVKQSAEWLKQVSQTHVIPE.

D-galactose 6-phosphate contacts are provided by Gln19, His116, Asn159, Glu160, and Asn297. Glu160 acts as the Proton donor in catalysis. The active-site Nucleophile is the Glu375. D-galactose 6-phosphate contacts are provided by Ser433, Trp434, Lys440, and Tyr442.

It belongs to the glycosyl hydrolase 1 family.

It catalyses the reaction a 6-phospho-beta-D-galactoside + H2O = D-galactose 6-phosphate + an alcohol. Its pathway is carbohydrate metabolism; lactose degradation; D-galactose 6-phosphate and beta-D-glucose from lactose 6-phosphate: step 1/1. This chain is 6-phospho-beta-galactosidase, found in Lacticaseibacillus rhamnosus (Lactobacillus rhamnosus).